The primary structure comprises 350 residues: Geranylgeranyl pyrophosphate synthase (350 aa).

The isopentenyl diphosphate site is built by lysine 66, arginine 69, and histidine 98. Residues aspartate 105 and aspartate 109 each coordinate Mg(2+). Arginine 114 serves as a coordination point for dimethylallyl diphosphate. Arginine 115 is a binding site for isopentenyl diphosphate. The dimethylallyl diphosphate site is built by lysine 200, threonine 201, glutamine 236, asparagine 243, and lysine 263.

This sequence belongs to the FPP/GGPP synthase family. Mg(2+) is required as a cofactor.

It catalyses the reaction isopentenyl diphosphate + dimethylallyl diphosphate = (2E)-geranyl diphosphate + diphosphate. It carries out the reaction isopentenyl diphosphate + (2E)-geranyl diphosphate = (2E,6E)-farnesyl diphosphate + diphosphate. The enzyme catalyses isopentenyl diphosphate + (2E,6E)-farnesyl diphosphate = (2E,6E,10E)-geranylgeranyl diphosphate + diphosphate. The protein operates within secondary metabolite biosynthesis; terpenoid biosynthesis. In terms of biological role, geranylgeranyl pyrophosphate synthase; part of the gene cluster that mediates the biosynthesis of pleuromutilin, a tricyclic diterpene showing antibacterial properties. The geranylgeranyl diphosphate (GGPP) synthase ple4 catalyzes the first step in pleuromutilin biosynthesis. GGPP is then substrate of the premutilin synthase (PS) ple3 to yield premutilin. Premutilin synthase is a bifunctional enzyme composed of the fusion of a class II diterpene cyclase (DTC) and a class I diterpene synthase (DTS), with the corresponding domains and active sites containing characteristic aspartate-rich motifs. GGPP is first converted to mutildienyl-diphosphate (MPP) at the class II DTC site. MPP is subsequently further cyclized at the class I DTS site, followed by a 1,5-hydride shift and addition of water prior to terminating deprotonation, to yield premutilin. The cytochrome P450 monooxygenases ple5 and ple6 hydroxylate premutilin at C-11 and C-3, respectively, producing 11-hydroxypremutilin and 3-hydroxypremutilin. The combination of the actions of both ple5 and ple6 leads to the production of 3,11-dihydroxypremutilin. The short chain dehydrogenase ple7 further converts 3,11-dihydroxypremutilin into mutilin. The acetyltransferase ple2 then acetylates mutilin to produce 14-O-acetylmutilin. Finally, the cytochrome P450 monooxygenase ple1 catalyzes hydroxylation on the alpha position of the acetyl side chain of 14-O-acetylmutilin to yield pleuromutilin. This Rhodocybe pseudopiperita (Clitopilus pseudopiperitus) protein is Geranylgeranyl pyrophosphate synthase.